Reading from the N-terminus, the 149-residue chain is Large ribosomal subunit protein uL15 (149 aa).

Basic residues-rich tracts occupy residues M1–H14 and R21–G30. Positions M1–R42 are disordered.

It belongs to the universal ribosomal protein uL15 family.

The chain is Large ribosomal subunit protein uL15 from Blumeria hordei (Barley powdery mildew).